The chain runs to 459 residues: Mitochondrial distribution and morphology protein 10 (459 aa).

It belongs to the MDM10 family. In terms of assembly, component of the ER-mitochondria encounter structure (ERMES) or MDM complex, composed of MMM1, MDM10, MDM12 and MDM34. Associates with the mitochondrial outer membrane sorting assembly machinery SAM(core) complex.

It is found in the mitochondrion outer membrane. Functionally, component of the ERMES/MDM complex, which serves as a molecular tether to connect the endoplasmic reticulum and mitochondria. Components of this complex are involved in the control of mitochondrial shape and protein biogenesis and may function in phospholipid exchange. MDM10 is involved in the late assembly steps of the general translocase of the mitochondrial outer membrane (TOM complex). Functions in the TOM40-specific route of the assembly of outer membrane beta-barrel proteins, including the association of TOM40 with the receptor TOM22 and small TOM proteins. Can associate with the SAM(core) complex as well as the MDM12-MMM1 complex, both involved in late steps of the major beta-barrel assembly pathway, that is responsible for biogenesis of all outer membrane beta-barrel proteins. May act as a switch that shuttles between both complexes and channels precursor proteins into the TOM40-specific pathway. Plays a role in mitochondrial morphology and in the inheritance of mitochondria. In Clavispora lusitaniae (strain ATCC 42720) (Yeast), this protein is Mitochondrial distribution and morphology protein 10.